The chain runs to 445 residues: Glutamyl-tRNA reductase (445 aa).

Substrate-binding positions include 49 to 52, Ser-109, 114 to 116, and Gln-120; these read TCNR and ETQ. The active-site Nucleophile is the Cys-50. Residue 189–194 coordinates NADP(+); that stretch reads GAGEMS.

This sequence belongs to the glutamyl-tRNA reductase family. In terms of assembly, homodimer.

The catalysed reaction is (S)-4-amino-5-oxopentanoate + tRNA(Glu) + NADP(+) = L-glutamyl-tRNA(Glu) + NADPH + H(+). It participates in porphyrin-containing compound metabolism; protoporphyrin-IX biosynthesis; 5-aminolevulinate from L-glutamyl-tRNA(Glu): step 1/2. In terms of biological role, catalyzes the NADPH-dependent reduction of glutamyl-tRNA(Glu) to glutamate 1-semialdehyde (GSA). The sequence is that of Glutamyl-tRNA reductase from Staphylococcus carnosus (strain TM300).